The sequence spans 492 residues: Linolenate hydroperoxide lyase, chloroplastic (492 aa).

The segment at 1-33 (MLLRTMAATSPRPPPSTSLTSQQPPSPPSQLPL) is disordered. The N-terminal 34 residues, 1–34 (MLLRTMAATSPRPPPSTSLTSQQPPSPPSQLPLR), are a transit peptide targeting the chloroplast. A heme-binding site is contributed by Cys-454.

Belongs to the cytochrome P450 family. Heme is required as a cofactor. In terms of tissue distribution, expressed in roots, leaves, flowers and siliques.

The protein resides in the plastid. It is found in the chloroplast. Catalyzes the conversion of (9Z,11E,15Z)-(13S)-hydroperoxyoctadeca-9,11,15-trienoate to (9Z)-12-oxo-dodec-9-enoate and cis-3-hexenal. Possesses low activity toward (9Z,11E)-(13S)-13-hydroperoxyoctadeca-9,11-dienoate. Required for the synthesis of the green leaf volatiles (GLVs) hexanal and trans-2-hexenal. The protein is Linolenate hydroperoxide lyase, chloroplastic of Arabidopsis thaliana (Mouse-ear cress).